A 327-amino-acid chain; its full sequence is Tartrate-resistant acid phosphatase type 5 (327 aa).

Residues 1–22 (MDSWVVLLGLQIIWLPLLTHGT) form the signal peptide. Asp35, Asp73, Tyr76, and Asn112 together coordinate Fe cation. 2 N-linked (GlcNAc...) asparagine glycosylation sites follow: Asn118 and Asn149. The cysteines at positions 163 and 221 are disulfide-linked. Fe cation contacts are provided by His207, His242, and His244.

As to quaternary structure, exists either as monomer or, after proteolytic processing, as a dimer of two chains linked by disulfide bond(s). Requires Fe cation as cofactor. As to expression, characteristic constituent of osteoclasts.

The protein localises to the lysosome. The catalysed reaction is a phosphate monoester + H2O = an alcohol + phosphate. Its function is as follows. May play a role in the process of bone resorption. The osteoclastic trap acts on nucleotide tri- and diphosphates with higher affinity, compared with other substrates. The polypeptide is Tartrate-resistant acid phosphatase type 5 (Acp5) (Mus musculus (Mouse)).